The sequence spans 87 residues: Small ribosomal subunit protein bS20 (87 aa).

Basic residues predominate over residues 1 to 11; the sequence is MANHKSALKRI. Positions 1-23 are disordered; sequence MANHKSALKRIKQTEKRTERNRH.

It belongs to the bacterial ribosomal protein bS20 family.

Binds directly to 16S ribosomal RNA. The polypeptide is Small ribosomal subunit protein bS20 (Geotalea uraniireducens (strain Rf4) (Geobacter uraniireducens)).